The following is a 37-amino-acid chain: Dolichyl-diphosphooligosaccharide--protein glycosyltransferase subunit 4A (37 aa).

Residues 1–7 are Lumenal-facing; sequence MIDDQDL. Residues 8–28 traverse the membrane as a helical segment; it reads GFIANFLGIFIFALVIAYHYV. At 29–37 the chain is on the cytoplasmic side; that stretch reads TADPKYEAT.

Belongs to the OST4 family. As to quaternary structure, component of the oligosaccharyltransferase (OST) complex.

Its subcellular location is the endoplasmic reticulum membrane. In terms of biological role, subunit of the oligosaccharyl transferase (OST) complex that catalyzes the initial transfer of a defined glycan (Glc(3)Man(9)GlcNAc(2) in eukaryotes) from the lipid carrier dolichol-pyrophosphate to an asparagine residue within an Asn-X-Ser/Thr consensus motif in nascent polypeptide chains, the first step in protein N-glycosylation. N-glycosylation occurs cotranslationally and the complex associates with the Sec61 complex at the channel-forming translocon complex that mediates protein translocation across the endoplasmic reticulum (ER). All subunits are required for a maximal enzyme activity. In Arabidopsis thaliana (Mouse-ear cress), this protein is Dolichyl-diphosphooligosaccharide--protein glycosyltransferase subunit 4A (OST4A).